The primary structure comprises 179 residues: Ribosome maturation factor RimM (179 aa).

In terms of domain architecture, PRC barrel spans His-100–Leu-176.

It belongs to the RimM family. In terms of assembly, binds ribosomal protein uS19.

Its subcellular location is the cytoplasm. Functionally, an accessory protein needed during the final step in the assembly of 30S ribosomal subunit, possibly for assembly of the head region. Essential for efficient processing of 16S rRNA. May be needed both before and after RbfA during the maturation of 16S rRNA. It has affinity for free ribosomal 30S subunits but not for 70S ribosomes. In Prochlorococcus marinus subsp. pastoris (strain CCMP1986 / NIES-2087 / MED4), this protein is Ribosome maturation factor RimM.